The following is a 166-amino-acid chain: Regulator of ribonuclease activity A (166 aa).

This sequence belongs to the RraA family. Homotrimer. Binds to both RNA-binding sites in the C-terminal region of Rne and to RhlB.

Its subcellular location is the cytoplasm. Functionally, globally modulates RNA abundance by binding to RNase E (Rne) and regulating its endonucleolytic activity. Can modulate Rne action in a substrate-dependent manner by altering the composition of the degradosome. Modulates RNA-binding and helicase activities of the degradosome. The polypeptide is Regulator of ribonuclease activity A (Histophilus somni (strain 129Pt) (Haemophilus somnus)).